The following is a 1159-amino-acid chain: Reverse gyrase 2 (1159 aa).

Residues 1-40 (MALELIERGCPNCGGVISSDRLEKGLPCSKCLPKPTEEKV) form an RG N-terminal-type zinc finger. Zn(2+) contacts are provided by Cys10, Cys13, Cys28, and Cys31. Residues Gln82 and 99–106 (APTGVGKT) contribute to the ATP site. The region spanning 86 to 275 (AKRVFMNQSF…LFRNLLGFDV (190 aa)) is the Helicase ATP-binding domain. A DEAD box motif is present at residues 196–199 (DDID). A topoisomerase I region spans residues 583-1159 (DLFKTTLVIV…LLKEEKAFKK (577 aa)). The region spanning 587–743 (TTLVIVESPN…NIKRAEFHEV (157 aa)) is the Toprim domain. 2 residues coordinate Mg(2+): Glu593 and Asp712. The 394-residue stretch at 759-1152 (DLNLVKAQLV…EVHRIKVLLK (394 aa)) folds into the Topo IA-type catalytic domain. Residue Tyr902 is the O-(5'-phospho-DNA)-tyrosine intermediate of the active site.

This sequence in the N-terminal section; belongs to the DEAD box helicase family. DDVD subfamily. In the C-terminal section; belongs to the type IA topoisomerase family. Monomer. The cofactor is Zn(2+). Mg(2+) is required as a cofactor.

It is found in the cytoplasm. The enzyme catalyses ATP + H2O = ADP + phosphate + H(+). Functionally, modifies the topological state of DNA by introducing positive supercoils in an ATP-dependent process, increasing the linking number in steps of +1. Binds to single-stranded DNA, transiently cleaves and then rejoins the ends, introducing a positive supercoil in the process. The scissile phosphodiester is attacked by the catalytic tyrosine of the enzyme, resulting in the formation of a DNA-(5'-phosphotyrosyl)-enzyme intermediate. Probably involved in rewinding DNA strands in regions of the chromosome that have opened up to allow replication, transcription, DNA repair and/or for DNA protection. The protein is Reverse gyrase 2 of Aquifex aeolicus (strain VF5).